The chain runs to 155 residues: Ribosomal RNA large subunit methyltransferase H (155 aa).

S-adenosyl-L-methionine is bound by residues Leu-72, Gly-103, and 122–127 (LSPLTL).

It belongs to the RNA methyltransferase RlmH family. Homodimer.

The protein resides in the cytoplasm. The enzyme catalyses pseudouridine(1915) in 23S rRNA + S-adenosyl-L-methionine = N(3)-methylpseudouridine(1915) in 23S rRNA + S-adenosyl-L-homocysteine + H(+). Its function is as follows. Specifically methylates the pseudouridine at position 1915 (m3Psi1915) in 23S rRNA. The polypeptide is Ribosomal RNA large subunit methyltransferase H (Actinobacillus pleuropneumoniae serotype 3 (strain JL03)).